The sequence spans 428 residues: Enolase (428 aa).

Glutamine 164 is a (2R)-2-phosphoglycerate binding site. Glutamate 208 (proton donor) is an active-site residue. Mg(2+)-binding residues include aspartate 245, glutamate 286, and aspartate 313. 4 residues coordinate (2R)-2-phosphoglycerate: lysine 338, arginine 367, serine 368, and lysine 389. Residue lysine 338 is the Proton acceptor of the active site.

It belongs to the enolase family. It depends on Mg(2+) as a cofactor.

It is found in the cytoplasm. It localises to the secreted. The protein localises to the cell surface. It catalyses the reaction (2R)-2-phosphoglycerate = phosphoenolpyruvate + H2O. It functions in the pathway carbohydrate degradation; glycolysis; pyruvate from D-glyceraldehyde 3-phosphate: step 4/5. Its function is as follows. Catalyzes the reversible conversion of 2-phosphoglycerate (2-PG) into phosphoenolpyruvate (PEP). It is essential for the degradation of carbohydrates via glycolysis. The polypeptide is Enolase (Pyrococcus abyssi (strain GE5 / Orsay)).